The chain runs to 422 residues: Structural polyprotein (422 aa).

The Extracellular portion of the chain corresponds to 1 to 359 (SVTEHFNVYK…WPHEIIQYYY (359 aa)). Residues Asn-200 and Asn-262 are each glycosylated (N-linked (GlcNAc...) asparagine; by host). Residues 360–382 (GLYPAATIAAVSGXSLMALLTLA) traverse the membrane as a helical segment. Residues 383 to 422 (ATCCMLATARRKCLTPYALTPGAVVPLTLGLXXCAPRANA) are Cytoplasmic-facing. Residues Cys-385, Cys-395, and Cys-416 are each lipidated (S-palmitoyl cysteine; by host). A transient transmembrane before p62-6K protein processing region spans residues 395–415 (CLTPYALTPGAVVPLTLGLXX).

In terms of assembly, spike glycoprotein E2: Processing of the precursor of protein E3/E2 into E2 and E3 results in a heterodimer of the spike glycoproteins E2 and E1. Spike glycoprotein E2: Spike at virion surface are constituted of three E2-E1 heterodimers. Spike glycoprotein E2: Interacts with 6K protein. Structural polyprotein: Specific enzymatic cleavages in vivo yield mature proteins. Capsid protein is auto-cleaved during polyprotein translation, unmasking a signal peptide at the N-terminus of the precursor of E3/E2. The remaining polyprotein is then targeted to the host endoplasmic reticulum, where host signal peptidase cleaves it into pE2, 6K and E1 proteins. pE2 is further processed to mature E3 and E2 by host furin in trans-Golgi vesicle. In terms of processing, spike glycoprotein E2: Palmitoylated via thioester bonds. These palmitoylations may induce disruption of the C-terminus transmembrane. This would result in the reorientation of E2 C-terminus from lumenal to cytoplasmic side. Post-translationally, spike glycoprotein E2: N-glycosylated.

Its subcellular location is the virion membrane. The protein localises to the host cell membrane. Its function is as follows. Spike glycoprotein E2: Plays a role in viral attachment to target host cell, by binding to the cell receptor. Synthesized as a p62 precursor which is processed by furin at the cell membrane just before virion budding, giving rise to E2-E1 heterodimer. The p62-E1 heterodimer is stable, whereas E2-E1 is unstable and dissociate at low pH. p62 is processed at the last step, presumably to avoid E1 fusion activation before its final export to cell surface. E2 C-terminus contains a transitory transmembrane that would be disrupted by palmitoylation, resulting in reorientation of the C-terminal tail from lumenal to cytoplasmic side. This step is critical since E2 C-terminus is involved in budding by interacting with capsid proteins. This release of E2 C-terminus in cytoplasm occurs lately in protein export, and precludes premature assembly of particles at the endoplasmic reticulum membrane. The protein is Structural polyprotein of Ross river virus (strain 213970) (RRV).